Consider the following 186-residue polypeptide: Ribosome-recycling factor (186 aa).

Belongs to the RRF family.

The protein resides in the cytoplasm. In terms of biological role, responsible for the release of ribosomes from messenger RNA at the termination of protein biosynthesis. May increase the efficiency of translation by recycling ribosomes from one round of translation to another. The sequence is that of Ribosome-recycling factor from Pelodictyon phaeoclathratiforme (strain DSM 5477 / BU-1).